A 569-amino-acid chain; its full sequence is Glutamyl-tRNA reductase (569 aa).

Residues 49-52 (TCNR), serine 109, 114-116 (EGQ), and glutamine 120 each bind substrate. The active-site Nucleophile is cysteine 50. NADP(+) is bound at residue 192-197 (GAGSMS). Residues 284–397 (PVAVREETPA…VEAPRPAPAL (114 aa)) form an insert region. Residues 546 to 569 (AAVSRADDRDTSDSTENAKNRGRE) are disordered. Residues 550 to 569 (RADDRDTSDSTENAKNRGRE) are compositionally biased toward basic and acidic residues.

Belongs to the glutamyl-tRNA reductase family. In terms of assembly, homodimer.

It carries out the reaction (S)-4-amino-5-oxopentanoate + tRNA(Glu) + NADP(+) = L-glutamyl-tRNA(Glu) + NADPH + H(+). It participates in porphyrin-containing compound metabolism; protoporphyrin-IX biosynthesis; 5-aminolevulinate from L-glutamyl-tRNA(Glu): step 1/2. Functionally, catalyzes the NADPH-dependent reduction of glutamyl-tRNA(Glu) to glutamate 1-semialdehyde (GSA). In Streptomyces avermitilis (strain ATCC 31267 / DSM 46492 / JCM 5070 / NBRC 14893 / NCIMB 12804 / NRRL 8165 / MA-4680), this protein is Glutamyl-tRNA reductase.